Consider the following 835-residue polypeptide: Ion-translocating oxidoreductase complex subunit C (835 aa).

4Fe-4S ferredoxin-type domains lie at Tyr-368–Tyr-397 and Lys-407–Phe-436. [4Fe-4S] cluster is bound by residues Cys-377, Cys-380, Cys-383, Cys-387, Cys-416, Cys-419, Cys-422, and Cys-426. The span at Ala-468–Met-489 shows a compositional bias: basic and acidic residues. Disordered regions lie at residues Ala-468–Ala-492, Gln-540–Ala-574, Lys-586–Pro-618, Lys-634–Pro-666, Lys-682–Pro-714, Lys-730–Pro-762, and Lys-778–Arg-811. A compositionally biased stretch (polar residues) spans Thr-552–Glu-561. A compositionally biased stretch (polar residues) spans Ser-648 to Asn-657. 2 stretches are compositionally biased toward polar residues: residues Ser-745 to Glu-756 and Ser-793 to Glu-804.

This sequence belongs to the 4Fe4S bacterial-type ferredoxin family. RnfC subfamily. In terms of assembly, the complex is composed of six subunits: RnfA, RnfB, RnfC, RnfD, RnfE and RnfG. [4Fe-4S] cluster is required as a cofactor.

The protein resides in the cell inner membrane. Its function is as follows. Part of a membrane-bound complex that couples electron transfer with translocation of ions across the membrane. The sequence is that of Ion-translocating oxidoreductase complex subunit C from Pasteurella multocida (strain Pm70).